We begin with the raw amino-acid sequence, 341 residues long: L-threonine 3-dehydrogenase (341 aa).

A Zn(2+)-binding site is contributed by cysteine 38. Catalysis depends on charge relay system residues threonine 40 and histidine 43. Zn(2+) is bound by residues histidine 63, glutamate 64, cysteine 93, cysteine 96, cysteine 99, and cysteine 107. Residues isoleucine 175, aspartate 195, arginine 200, 262 to 264 (LGI), and 286 to 287 (IY) contribute to the NAD(+) site.

The protein belongs to the zinc-containing alcohol dehydrogenase family. Homotetramer. The cofactor is Zn(2+).

The protein localises to the cytoplasm. The catalysed reaction is L-threonine + NAD(+) = (2S)-2-amino-3-oxobutanoate + NADH + H(+). It functions in the pathway amino-acid degradation; L-threonine degradation via oxydo-reductase pathway; glycine from L-threonine: step 1/2. In terms of biological role, catalyzes the NAD(+)-dependent oxidation of L-threonine to 2-amino-3-ketobutyrate. In Pseudoalteromonas translucida (strain TAC 125), this protein is L-threonine 3-dehydrogenase.